A 129-amino-acid chain; its full sequence is Small ribosomal subunit protein uS11 (129 aa).

The protein belongs to the universal ribosomal protein uS11 family. Part of the 30S ribosomal subunit. Interacts with proteins S7 and S18. Binds to IF-3.

Functionally, located on the platform of the 30S subunit, it bridges several disparate RNA helices of the 16S rRNA. Forms part of the Shine-Dalgarno cleft in the 70S ribosome. The chain is Small ribosomal subunit protein uS11 from Levilactobacillus brevis (strain ATCC 367 / BCRC 12310 / CIP 105137 / JCM 1170 / LMG 11437 / NCIMB 947 / NCTC 947) (Lactobacillus brevis).